We begin with the raw amino-acid sequence, 275 residues long: 2-dehydro-3-deoxyphosphooctonate aldolase (275 aa).

Belongs to the KdsA family.

Its subcellular location is the cytoplasm. The enzyme catalyses D-arabinose 5-phosphate + phosphoenolpyruvate + H2O = 3-deoxy-alpha-D-manno-2-octulosonate-8-phosphate + phosphate. Its pathway is carbohydrate biosynthesis; 3-deoxy-D-manno-octulosonate biosynthesis; 3-deoxy-D-manno-octulosonate from D-ribulose 5-phosphate: step 2/3. It participates in bacterial outer membrane biogenesis; lipopolysaccharide biosynthesis. This Francisella tularensis subsp. novicida (strain U112) protein is 2-dehydro-3-deoxyphosphooctonate aldolase.